The primary structure comprises 252 residues: Flagellar brake protein YcgR (252 aa).

In terms of domain architecture, PilZ spans 118 to 236 (QRREYFRVSI…EKGLQRAIFE (119 aa)).

Belongs to the YcgR family. Monomer. Interacts with the flagellar basal bodies.

The protein localises to the bacterial flagellum basal body. Its function is as follows. Acts as a flagellar brake, regulating swimming and swarming in a bis-(3'-5') cyclic diguanylic acid (c-di-GMP)-dependent manner. Binds 1 c-di-GMP dimer per subunit. Increasing levels of c-di-GMP lead to decreased motility. This is Flagellar brake protein YcgR from Yersinia pseudotuberculosis serotype I (strain IP32953).